The following is a 257-amino-acid chain: 1-(5-phosphoribosyl)-5-[(5-phosphoribosylamino)methylideneamino] imidazole-4-carboxamide isomerase (257 aa).

The active-site Proton acceptor is the Asp-8. Asp-129 functions as the Proton donor in the catalytic mechanism.

Belongs to the HisA/HisF family.

It localises to the cytoplasm. It carries out the reaction 1-(5-phospho-beta-D-ribosyl)-5-[(5-phospho-beta-D-ribosylamino)methylideneamino]imidazole-4-carboxamide = 5-[(5-phospho-1-deoxy-D-ribulos-1-ylimino)methylamino]-1-(5-phospho-beta-D-ribosyl)imidazole-4-carboxamide. The protein operates within amino-acid biosynthesis; L-histidine biosynthesis; L-histidine from 5-phospho-alpha-D-ribose 1-diphosphate: step 4/9. This chain is 1-(5-phosphoribosyl)-5-[(5-phosphoribosylamino)methylideneamino] imidazole-4-carboxamide isomerase, found in Nostoc punctiforme (strain ATCC 29133 / PCC 73102).